The following is a 192-amino-acid chain: Thiosulfate reductase electron transfer subunit PhsB (192 aa).

4Fe-4S ferredoxin-type domains lie at 8–36 (YVML…VPEG), 55–86 (THFQ…RDEN), and 87–116 (GIVQ…LNPQ). Cysteine 17, cysteine 20, cysteine 23, cysteine 27, cysteine 64, cysteine 67, cysteine 72, cysteine 76, cysteine 96, cysteine 99, cysteine 102, cysteine 106, cysteine 123, cysteine 126, cysteine 139, and cysteine 143 together coordinate [4Fe-4S] cluster.

Composed of three subunits: PhsA, PhsB and PhsC. The cofactor is [4Fe-4S] cluster.

The protein localises to the cell inner membrane. Its function is as follows. Component of the PhsABC thiosulfate reductase that catalyzes the reduction of thiosulfate to sulfite and hydrogen sulfide, with menaquinol as the sole electron donor. Proton motive force (PMF) is required to drive transmembrane electron transfer within the reductase. The PhsB subunit transfers electrons between PhsC and PhsA. This is Thiosulfate reductase electron transfer subunit PhsB (phsB) from Salmonella typhi.